The following is a 181-amino-acid chain: NADH-quinone oxidoreductase subunit 2 (181 aa).

5 residues coordinate [2Fe-2S] cluster: cysteine 83, serine 87, cysteine 88, cysteine 124, and cysteine 128. The cysteines at positions 144 and 172 are disulfide-linked.

The protein belongs to the complex I 24 kDa subunit family. NDH-1 is composed of 15 different subunits, Nqo1 to Nqo15. The complex has a L-shaped structure, with the hydrophobic arm (subunits Nqo7, Nqo8 and Nqo10 to Nqo14) embedded in the membrane and the hydrophilic peripheral arm (subunits Nqo1 to Nqo6, Nqo9 and Nqo15) protruding into the bacterial cytoplasm. The hydrophilic domain contains all the redox centers. It depends on [2Fe-2S] cluster as a cofactor.

The protein localises to the cell membrane. It catalyses the reaction a quinone + NADH + 5 H(+)(in) = a quinol + NAD(+) + 4 H(+)(out). NDH-1 shuttles electrons from NADH, via FMN and iron-sulfur (Fe-S) centers, to quinones in the respiratory chain. The immediate electron acceptor for the enzyme in this species is menaquinone. Couples the redox reaction to proton translocation (for every two electrons transferred, four hydrogen ions are translocated across the cytoplasmic membrane), and thus conserves the redox energy in a proton gradient required for the synthesis of ATP. In Thermus thermophilus (strain ATCC 27634 / DSM 579 / HB8), this protein is NADH-quinone oxidoreductase subunit 2 (nqo2).